We begin with the raw amino-acid sequence, 399 residues long: Lipase member K (399 aa).

The first 19 residues, 1-19 (MWQLLAAACWMLLLGSMYG), serve as a signal peptide directing secretion. The 301-residue stretch at 78-378 (PAVYLQHGLI…HYNHVDFYLG (301 aa)) folds into the AB hydrolase-1 domain. The active-site Nucleophile is Ser172. A disulfide bridge links Cys246 with Cys255. Asn271 and Asn327 each carry an N-linked (GlcNAc...) asparagine glycan. Catalysis depends on charge relay system residues Asp343 and His372.

It belongs to the AB hydrolase superfamily. Lipase family. In terms of tissue distribution, exclusively expressed in the epidermis within the granular keratinocytes.

The protein localises to the secreted. Functionally, plays a highly specific role in the last step of keratinocyte differentiation. May have an essential function in lipid metabolism of the most differentiated epidermal layers. The sequence is that of Lipase member K (LIPK) from Homo sapiens (Human).